A 755-amino-acid polypeptide reads, in one-letter code: Photosystem I P700 chlorophyll a apoprotein A1 (755 aa).

8 helical membrane-spanning segments follow: residues Ile72–Ala95, Leu158–His181, Leu197–Ile221, Gln297–Tyr315, Trp352–Tyr375, Ile391–Val417, Ala439–His461, and Phe536–Leu554. Residues Cys578 and Cys587 each coordinate [4Fe-4S] cluster. A run of 2 helical transmembrane segments spans residues His594 to Trp615 and Leu669 to Phe691. His680 is a binding site for chlorophyll a'. Positions 688 and 696 each coordinate chlorophyll a. A phylloquinone-binding site is contributed by Trp697. The chain crosses the membrane as a helical span at residues Ala729–Ala749.

It belongs to the PsaA/PsaB family. In terms of assembly, the PsaA/B heterodimer binds the P700 chlorophyll special pair and subsequent electron acceptors. PSI consists of a core antenna complex that captures photons, and an electron transfer chain that converts photonic excitation into a charge separation. The cyanobacterial PSI reaction center is composed of one copy each of PsaA,B,C,D,E,F,I,J,K,L,M and X, and forms trimeric complexes. Requires PSI electron transfer chain: 5 chlorophyll a, 1 chlorophyll a', 2 phylloquinones and 3 4Fe-4S clusters. PSI core antenna: 90 chlorophyll a, 22 carotenoids, 3 phospholipids and 1 galactolipid. P700 is a chlorophyll a/chlorophyll a' dimer, A0 is one or more chlorophyll a, A1 is one or both phylloquinones and FX is a shared 4Fe-4S iron-sulfur center. as cofactor.

It localises to the cellular thylakoid membrane. It catalyses the reaction reduced [plastocyanin] + hnu + oxidized [2Fe-2S]-[ferredoxin] = oxidized [plastocyanin] + reduced [2Fe-2S]-[ferredoxin]. PsaA and PsaB bind P700, the primary electron donor of photosystem I (PSI), as well as the electron acceptors A0, A1 and FX. PSI is a plastocyanin/cytochrome c6-ferredoxin oxidoreductase, converting photonic excitation into a charge separation, which transfers an electron from the donor P700 chlorophyll pair to the spectroscopically characterized acceptors A0, A1, FX, FA and FB in turn. Oxidized P700 is reduced on the lumenal side of the thylakoid membrane by plastocyanin or cytochrome c6. This is Photosystem I P700 chlorophyll a apoprotein A1 from Synechococcus sp. (strain JA-2-3B'a(2-13)) (Cyanobacteria bacterium Yellowstone B-Prime).